Here is a 28-residue protein sequence, read N- to C-terminus: Chassatide C11 (28 aa).

Intrachain disulfides connect cysteine 3-cysteine 19, cysteine 7-cysteine 21, and cysteine 12-cysteine 26. The residue at position 16 (methionine 16) is a Methionine sulfoxide; in form chassatide chaC11A.

Belongs to the cyclotide family. Bracelet subfamily. As to expression, expressed in fruit, pedicel and stem but not in leaf and root (at protein level).

Functionally, chassatide C11: Probably participates in a plant defense mechanism. Active against E.coli ATCC 25922 (MIC=8.5 uM) but not against S.aureus ATCC 12600 or S.epidermidis ATCC 14990. Has cytotoxic and hemolytic activity. Its function is as follows. Chassatide C11A: Probably participates in a plant defense mechanism. Has no activity against bacteria up to a concentration of 80 uM. Has no cytotoxic and no hemolytic activity. The sequence is that of Chassatide C11 from Chassalia chartacea (Chassalia curviflora).